The following is a 513-amino-acid chain: ATP synthase subunit alpha (513 aa).

169–176 contacts ATP; the sequence is GDRQIGKT.

Belongs to the ATPase alpha/beta chains family. F-type ATPases have 2 components, CF(1) - the catalytic core - and CF(0) - the membrane proton channel. CF(1) has five subunits: alpha(3), beta(3), gamma(1), delta(1), epsilon(1). CF(0) has three main subunits: a(1), b(2) and c(9-12). The alpha and beta chains form an alternating ring which encloses part of the gamma chain. CF(1) is attached to CF(0) by a central stalk formed by the gamma and epsilon chains, while a peripheral stalk is formed by the delta and b chains.

It localises to the cell inner membrane. The enzyme catalyses ATP + H2O + 4 H(+)(in) = ADP + phosphate + 5 H(+)(out). In terms of biological role, produces ATP from ADP in the presence of a proton gradient across the membrane. The alpha chain is a regulatory subunit. This is ATP synthase subunit alpha from Shewanella piezotolerans (strain WP3 / JCM 13877).